We begin with the raw amino-acid sequence, 462 residues long: Argininosuccinate lyase (462 aa).

This sequence belongs to the lyase 1 family. Argininosuccinate lyase subfamily.

Its subcellular location is the cytoplasm. The enzyme catalyses 2-(N(omega)-L-arginino)succinate = fumarate + L-arginine. The protein operates within amino-acid biosynthesis; L-arginine biosynthesis; L-arginine from L-ornithine and carbamoyl phosphate: step 3/3. This chain is Argininosuccinate lyase, found in Thermus thermophilus (strain ATCC BAA-163 / DSM 7039 / HB27).